The following is a 295-amino-acid chain: 4-hydroxy-tetrahydrodipicolinate synthase (295 aa).

Residue Thr46 participates in pyruvate binding. Tyr134 functions as the Proton donor/acceptor in the catalytic mechanism. Lys162 serves as the catalytic Schiff-base intermediate with substrate. Ile205 is a pyruvate binding site.

This sequence belongs to the DapA family. In terms of assembly, homotetramer; dimer of dimers.

It is found in the cytoplasm. It catalyses the reaction L-aspartate 4-semialdehyde + pyruvate = (2S,4S)-4-hydroxy-2,3,4,5-tetrahydrodipicolinate + H2O + H(+). It participates in amino-acid biosynthesis; L-lysine biosynthesis via DAP pathway; (S)-tetrahydrodipicolinate from L-aspartate: step 3/4. Its function is as follows. Catalyzes the condensation of (S)-aspartate-beta-semialdehyde [(S)-ASA] and pyruvate to 4-hydroxy-tetrahydrodipicolinate (HTPA). The polypeptide is 4-hydroxy-tetrahydrodipicolinate synthase (Anaeromyxobacter dehalogenans (strain 2CP-C)).